The following is a 254-amino-acid chain: Sec-independent protein translocase protein TatCy (254 aa).

The next 6 helical transmembrane spans lie at 24–44 (IVAL…KPII), 67–87 (LYVF…PVIL), 112–132 (VSIL…FPFV), 157–177 (FLLQ…ILMF), 187–207 (MFLA…AALI), and 212–232 (LLSH…SILI).

This sequence belongs to the TatC family. In terms of assembly, forms a complex with TatAy. Two types of complexes exist: one composed of TatAy and TatCy, and another composed only of TatAy.

The protein localises to the cell membrane. In terms of biological role, part of the twin-arginine translocation (Tat) system that transports large folded proteins containing a characteristic twin-arginine motif in their signal peptide across membranes. Required for YwbN secretion. The chain is Sec-independent protein translocase protein TatCy from Bacillus subtilis (strain 168).